The following is a 163-amino-acid chain: uncharacterized protein (163 aa).

The disordered stretch occupies residues 128 to 163 (PKKEKIKKAKRKKKGAKRASKKQKAKSKSARKSRRV). Positions 129–163 (KKEKIKKAKRKKKGAKRASKKQKAKSKSARKSRRV) are enriched in basic residues.

This is an uncharacterized protein from Sulfurisphaera tokodaii (strain DSM 16993 / JCM 10545 / NBRC 100140 / 7) (Sulfolobus tokodaii).